A 503-amino-acid polypeptide reads, in one-letter code: Maturase K (503 aa).

This sequence belongs to the intron maturase 2 family. MatK subfamily.

The protein localises to the plastid. It is found in the chloroplast. In terms of biological role, usually encoded in the trnK tRNA gene intron. Probably assists in splicing its own and other chloroplast group II introns. This is Maturase K from Rosa canina (Dog rose).